A 380-amino-acid chain; its full sequence is L-lactate dehydrogenase (380 aa).

One can recognise an FMN hydroxy acid dehydrogenase domain in the interval 1–380 (MIISASTDYR…SADSLVQGLR (380 aa)). Tyrosine 24 is a binding site for substrate. Residues serine 106 and glutamine 127 each contribute to the FMN site. Tyrosine 129 serves as a coordination point for substrate. Threonine 155 provides a ligand contact to FMN. Arginine 164 contacts substrate. Lysine 251 contacts FMN. The Proton acceptor role is filled by histidine 275. Position 278 (arginine 278) interacts with substrate. FMN is bound at residue 306–330 (DSGIRSGLDVVRMIALGADGVLLGR).

Belongs to the FMN-dependent alpha-hydroxy acid dehydrogenase family. Requires FMN as cofactor.

It localises to the cell inner membrane. The catalysed reaction is (S)-lactate + A = pyruvate + AH2. Catalyzes the conversion of L-lactate to pyruvate. Is coupled to the respiratory chain. This chain is L-lactate dehydrogenase, found in Serratia proteamaculans (strain 568).